Reading from the N-terminus, the 221-residue chain is Peptide methionine sulfoxide reductase MsrA (221 aa).

Cys54 is an active-site residue.

This sequence belongs to the MsrA Met sulfoxide reductase family.

The enzyme catalyses L-methionyl-[protein] + [thioredoxin]-disulfide + H2O = L-methionyl-(S)-S-oxide-[protein] + [thioredoxin]-dithiol. The catalysed reaction is [thioredoxin]-disulfide + L-methionine + H2O = L-methionine (S)-S-oxide + [thioredoxin]-dithiol. Functionally, has an important function as a repair enzyme for proteins that have been inactivated by oxidation. Catalyzes the reversible oxidation-reduction of methionine sulfoxide in proteins to methionine. The sequence is that of Peptide methionine sulfoxide reductase MsrA from Methylobacterium nodulans (strain LMG 21967 / CNCM I-2342 / ORS 2060).